The sequence spans 160 residues: MAKQKKHPTGTIAQNKKARHDYFIEHRFEAGLVLAGWEVKSLRASKLQLVDSYVLLKDGEAWLLGSHITPLTTASTHVIADPVRTRKLLLNARELEKLAAAVQQKGYACICLSWYWSKHLVKCEIALGKGKKEYDKRDTERERDSNRELHRAVRNKGKED.

The disordered stretch occupies residues 134 to 160 (YDKRDTERERDSNRELHRAVRNKGKED).

Belongs to the SmpB family.

The protein resides in the cytoplasm. Its function is as follows. Required for rescue of stalled ribosomes mediated by trans-translation. Binds to transfer-messenger RNA (tmRNA), required for stable association of tmRNA with ribosomes. tmRNA and SmpB together mimic tRNA shape, replacing the anticodon stem-loop with SmpB. tmRNA is encoded by the ssrA gene; the 2 termini fold to resemble tRNA(Ala) and it encodes a 'tag peptide', a short internal open reading frame. During trans-translation Ala-aminoacylated tmRNA acts like a tRNA, entering the A-site of stalled ribosomes, displacing the stalled mRNA. The ribosome then switches to translate the ORF on the tmRNA; the nascent peptide is terminated with the 'tag peptide' encoded by the tmRNA and targeted for degradation. The ribosome is freed to recommence translation, which seems to be the essential function of trans-translation. The protein is SsrA-binding protein of Pseudomonas fluorescens (strain SBW25).